A 105-amino-acid chain; its full sequence is Cell division protein FtsL (105 aa).

Residues 1–24 (MAEKMEKTGQILQMQLKRFSRVEK) lie on the Cytoplasmic side of the membrane. Residues 25-45 (AFYFSIAVTTLIVAISIIFMQ) form a helical membrane-spanning segment. At 46 to 105 (TKLLQVQNDLTKINAQIEEKKTELDDAKQEVNELLRAERLKEIANSHDLQLNNENIRIAE) the chain is on the extracellular side.

Belongs to the FtsL family.

Its subcellular location is the cell membrane. Its function is as follows. Essential cell division protein. The protein is Cell division protein FtsL of Streptococcus pneumoniae (strain ATCC BAA-255 / R6).